A 66-amino-acid polypeptide reads, in one-letter code: Large ribosomal subunit protein bL28 (66 aa).

The interval 1 to 26 (MAKDAITGARTRFGNQRSHALNSSRR) is disordered. Residues 13–25 (FGNQRSHALNSSR) show a composition bias toward polar residues.

It belongs to the bacterial ribosomal protein bL28 family.

This is Large ribosomal subunit protein bL28 from Leuconostoc mesenteroides subsp. mesenteroides (strain ATCC 8293 / DSM 20343 / BCRC 11652 / CCM 1803 / JCM 6124 / NCDO 523 / NBRC 100496 / NCIMB 8023 / NCTC 12954 / NRRL B-1118 / 37Y).